A 564-amino-acid chain; its full sequence is Efflux pump DEP3 (564 aa).

Residues methionine 1–arginine 12 show a composition bias toward polar residues. Positions methionine 1 to proline 48 are disordered. Residues proline 29–glycine 38 are compositionally biased toward basic and acidic residues. 14 helical membrane-spanning segments follow: residues serine 65–isoleucine 85, leucine 91–tryptophan 111, tryptophan 122–proline 142, valine 152–leucine 172, serine 185–alanine 205, tryptophan 212–phenylalanine 232, alanine 255–valine 275, glycine 281–leucine 301, phenylalanine 332–isoleucine 352, valine 362–methionine 382, glycine 386–methionine 406, isoleucine 423–leucine 443, alanine 452–glycine 472, and threonine 528–leucine 548.

Belongs to the major facilitator superfamily. TCR/Tet family.

It is found in the cell membrane. Its function is as follows. Efflux pump; part of the gene cluster that mediates the biosynthesis of depudecin, a highly oxidized eleven-carbon linear polyketide that acts as a histone deacetylase (HDAC) inhibitor and makes a small contribution to pathogenesis. Is presumed either to be responsible for exporting depudecin, to provide self-protection, or both. The chain is Efflux pump DEP3 from Alternaria brassicicola (Dark leaf spot agent).